The primary structure comprises 363 residues: Pyrimidine monooxygenase RutA (363 aa).

FMN-binding positions include 49-50 (IK), Asn-115, Glu-124, 140-141 (RY), and Ser-190.

The protein belongs to the NtaA/SnaA/DszA monooxygenase family. RutA subfamily.

It catalyses the reaction uracil + FMNH2 + NADH + O2 = (Z)-3-ureidoacrylate + FMN + NAD(+) + H2O + H(+). The catalysed reaction is thymine + FMNH2 + NADH + O2 = (Z)-2-methylureidoacrylate + FMN + NAD(+) + H2O + H(+). Catalyzes the pyrimidine ring opening between N-3 and C-4 by an unusual flavin hydroperoxide-catalyzed mechanism, adding oxygen atoms in the process to yield ureidoacrylate peracid, that immediately reacts with FMN forming ureidoacrylate and FMN-N(5)-oxide. The FMN-N(5)-oxide reacts spontaneously with NADH to produce FMN. Requires the flavin reductase RutF to regenerate FMN in vivo. In Klebsiella variicola (strain At-22), this protein is Pyrimidine monooxygenase RutA.